Reading from the N-terminus, the 416-residue chain is Actin-like protein 9 (416 aa).

The segment at 1–40 is disordered; that stretch reads MDASRPKSSESQSSLEAPRPGPNPSPNVVNKPLQRDSPGM.

This sequence belongs to the actin family. In terms of assembly, interacts with ACTL7A. As to expression, testis-specific.

The protein localises to the cytoplasmic vesicle. Its subcellular location is the secretory vesicle. It localises to the acrosome. The protein resides in the cytoplasm. It is found in the cytoskeleton. The protein localises to the perinuclear theca. Functionally, testis-specic protein that plays an important role in fusion of proacrosomal vesicles and perinuclear theca formation. The polypeptide is Actin-like protein 9 (Homo sapiens (Human)).